Consider the following 151-residue polypeptide: Small ribosomal subunit protein uS15 (151 aa).

Residues 1–20 (MGRMHSNGKGISGSSLPYNR) form a disordered region.

This sequence belongs to the universal ribosomal protein uS15 family. As to quaternary structure, component of the small ribosomal subunit. Part of the small subunit (SSU) processome, composed of more than 70 proteins and the RNA chaperone small nucleolar RNA (snoRNA) U3.

It is found in the cytoplasm. The protein localises to the nucleus. The protein resides in the nucleolus. Component of the small ribosomal subunit. The ribosome is a large ribonucleoprotein complex responsible for the synthesis of proteins in the cell. Part of the small subunit (SSU) processome, first precursor of the small eukaryotic ribosomal subunit. During the assembly of the SSU processome in the nucleolus, many ribosome biogenesis factors, an RNA chaperone and ribosomal proteins associate with the nascent pre-rRNA and work in concert to generate RNA folding, modifications, rearrangements and cleavage as well as targeted degradation of pre-ribosomal RNA by the RNA exosome. This Dictyostelium discoideum (Social amoeba) protein is Small ribosomal subunit protein uS15 (rps13).